Reading from the N-terminus, the 311-residue chain is 4-hydroxy-3-methylbut-2-enyl diphosphate reductase (311 aa).

Cys-14 is a binding site for [4Fe-4S] cluster. The (2E)-4-hydroxy-3-methylbut-2-enyl diphosphate site is built by His-43 and His-76. Dimethylallyl diphosphate-binding residues include His-43 and His-76. Isopentenyl diphosphate is bound by residues His-43 and His-76. Cys-98 serves as a coordination point for [4Fe-4S] cluster. His-126 contacts (2E)-4-hydroxy-3-methylbut-2-enyl diphosphate. Residue His-126 participates in dimethylallyl diphosphate binding. His-126 serves as a coordination point for isopentenyl diphosphate. The Proton donor role is filled by Glu-128. Thr-166 is a binding site for (2E)-4-hydroxy-3-methylbut-2-enyl diphosphate. Cys-196 is a binding site for [4Fe-4S] cluster. Residues Ser-224, Ser-225, Asn-226, and Ser-268 each contribute to the (2E)-4-hydroxy-3-methylbut-2-enyl diphosphate site. The dimethylallyl diphosphate site is built by Ser-224, Ser-225, Asn-226, and Ser-268. Residues Ser-224, Ser-225, Asn-226, and Ser-268 each contribute to the isopentenyl diphosphate site.

It belongs to the IspH family. Requires [4Fe-4S] cluster as cofactor.

It carries out the reaction isopentenyl diphosphate + 2 oxidized [2Fe-2S]-[ferredoxin] + H2O = (2E)-4-hydroxy-3-methylbut-2-enyl diphosphate + 2 reduced [2Fe-2S]-[ferredoxin] + 2 H(+). The catalysed reaction is dimethylallyl diphosphate + 2 oxidized [2Fe-2S]-[ferredoxin] + H2O = (2E)-4-hydroxy-3-methylbut-2-enyl diphosphate + 2 reduced [2Fe-2S]-[ferredoxin] + 2 H(+). It functions in the pathway isoprenoid biosynthesis; dimethylallyl diphosphate biosynthesis; dimethylallyl diphosphate from (2E)-4-hydroxy-3-methylbutenyl diphosphate: step 1/1. Its pathway is isoprenoid biosynthesis; isopentenyl diphosphate biosynthesis via DXP pathway; isopentenyl diphosphate from 1-deoxy-D-xylulose 5-phosphate: step 6/6. Functionally, catalyzes the conversion of 1-hydroxy-2-methyl-2-(E)-butenyl 4-diphosphate (HMBPP) into a mixture of isopentenyl diphosphate (IPP) and dimethylallyl diphosphate (DMAPP). Acts in the terminal step of the DOXP/MEP pathway for isoprenoid precursor biosynthesis. This Chromobacterium violaceum (strain ATCC 12472 / DSM 30191 / JCM 1249 / CCUG 213 / NBRC 12614 / NCIMB 9131 / NCTC 9757 / MK) protein is 4-hydroxy-3-methylbut-2-enyl diphosphate reductase.